The following is a 1107-amino-acid chain: MPVMKGLLAPQNTFLDTIATRFDGTHSNFILANAQVAKGFPIVYCSDGFCELAGFARTEVMQKSCSCKFLFGVETNEQLMLQIEKSLEEKTEFKGEIMFYKKNGSPFWCLLDIVPIKNEKGDVVLFLASFKDITDTKVKITPEDKKEDKVKGRSRAGTHFDSARRRSRAVLYHISGHLQRREKNKLKINNNVFVDKPAFPEYKVSDAKKSKFILLHFSTFKAGWDWLILLATFYVAVTVPYNVCFIGNDDLSTTRSTTVSDIAVEILFIIDIILNFRTTYVSKSGQVIFEARSICIHYVTTWFIIDLIAALPFDLLYAFNVTVVSLVHLLKTVRLLRLLRLLQKLDRYSQHSTIVLTLLMSMFALLAHWMACIWYVIGKMEREDNSLLKWEVGWLHELGKRLESPYYGNNTLGGPSIRSAYIAALYFTLSSLTSVGFGNVSANTDAEKIFSICTMLIGALMHALVFGNVTAIIQRMYSRWSLYHTRTKDLKDFIRVHHLPQQLKQRMLEYFQTTWSVNNGIDSNELLKDFPDELRSDITMHLNKEILQLSLFECASRGCLRSLSLHIKTSFCAPGEYLLRQGDALQAIYFVCSGSMEVLKDSMVLAILGKGDLIGANLSIKDQVIKTNADVKALTYCDLQCIILKGLFEVLDLYPEYAHKFVEDIQHDLTYNLREGHESDVISRLSNKSMVSQSEPKGNGNINKRLPSIVEDEEEEEEGEEEEAVSLSPICTRGSSSRNKKVGSNKAYLGLSLKQLASGTVPFHSPIRVSRSNSPKTKQEIDPPNHNKRKEKNLKLQLSTLNNAGPPDLSPRIVDGIEDGNSSEESQTFDFGSERIRSEPRISPPLGDPEIGAAVLFIKAEETKQQINKLNSEVTTLTQEVSQLGKDMRNVIQLLENVLSPQQPSRFCSLHSTSVCPSRESLQTRTSWSAHQPCLHLQTGGAAYTQAQLCSSNITSDIWSVDPSSVGSSPQRTGAHEQNPADSELYHSPSLDYSPSHYQVVQEGHLQFLRCISPHSDSTLTPLQSISATLSSSVCSSSETSLHLVLPSRSEEGSFSQGTVSSFSLENLPGSWNQEGMASASTKPLENLPLEVVTSTAEVKDNKAINV.

Residues 1-225 (MPVMKGLLAP…HFSTFKAGWD (225 aa)) are Cytoplasmic-facing. The 73-residue stretch at 18 to 90 (IATRFDGTHS…LQIEKSLEEK (73 aa)) folds into the PAS domain. Residues 93 to 145 (FKGEIMFYKKNGSPFWCLLDIVPIKNEKGDVVLFLASFKDITDTKVKITPEDK) form the PAC domain. A helical transmembrane segment spans residues 226–246 (WLILLATFYVAVTVPYNVCFI). The Extracellular portion of the chain corresponds to 247 to 255 (GNDDLSTTR). Residues 256-276 (STTVSDIAVEILFIIDIILNF) form a helical membrane-spanning segment. Residues 277–298 (RTTYVSKSGQVIFEARSICIHY) are Cytoplasmic-facing. A helical membrane pass occupies residues 299-319 (VTTWFIIDLIAALPFDLLYAF). A glycan (N-linked (GlcNAc...) asparagine) is linked at asparagine 320. Residues 320-327 (NVTVVSLV) are Extracellular-facing. A helical; Voltage-sensor transmembrane segment spans residues 328–348 (HLLKTVRLLRLLRLLQKLDRY). Residues 349 to 357 (SQHSTIVLT) lie on the Cytoplasmic side of the membrane. Residues 358–378 (LLMSMFALLAHWMACIWYVIG) traverse the membrane as a helical segment. The Extracellular portion of the chain corresponds to 379–419 (KMEREDNSLLKWEVGWLHELGKRLESPYYGNNTLGGPSIRS). The N-linked (GlcNAc...) asparagine glycan is linked to asparagine 409. The pore-forming intramembrane region spans 420-440 (AYIAALYFTLSSLTSVGFGNV). The short motif at 434-439 (SVGFGN) is the Selectivity filter element. Topologically, residues 441-448 (SANTDAEK) are extracellular. The chain crosses the membrane as a helical span at residues 449–469 (IFSICTMLIGALMHALVFGNV). The Cytoplasmic segment spans residues 470–1107 (TAIIQRMYSR…EVKDNKAINV (638 aa)). Positions 551–668 (LFECASRGCL…HKFVEDIQHD (118 aa)) are cNMP-binding domain. The span at 686–702 (SNKSMVSQSEPKGNGNI) shows a compositional bias: polar residues. Disordered regions lie at residues 686–742 (SNKS…NKKV), 764–791 (HSPIRVSRSNSPKTKQEIDPPNHNKRKE), 818–847 (EDGNSSEESQTFDFGSERIRSEPRISPPLG), and 961–989 (VDPSSVGSSPQRTGAHEQNPADSELYHSP). Acidic residues predominate over residues 710–724 (VEDEEEEEEGEEEEA). Over residues 961–972 (VDPSSVGSSPQR) the composition is skewed to polar residues.

It belongs to the potassium channel family. H (Eag) (TC 1.A.1.20) subfamily. Kv12.1/KCNH8 sub-subfamily. In terms of assembly, the potassium channel is probably composed of a homo- or heterotetrameric complex of pore-forming alpha subunits that can associate with modulating beta subunits. In terms of tissue distribution, primarily expressed in the nervous system.

It localises to the membrane. It carries out the reaction K(+)(in) = K(+)(out). Pore-forming (alpha) subunit of a voltage-gated delayed rectifier potassium channel that mediates outward-rectifying potassium currents. Elicits a slowly activating, non-inactivating and slowly deactivation outwards potassium current at depolarizating voltages from -30 mV to +50mV. Shows no obvious change in the activation rate from different holding potentials. Activation is strongly dependent on the pH of the external solution. This is Voltage-gated delayed rectifier potassium channel KCNH8 from Homo sapiens (Human).